The following is a 663-amino-acid chain: Translation factor GUF1 homolog, mitochondrial (663 aa).

The 187-residue stretch at glutamate 64–proline 250 folds into the tr-type G domain. Residues alanine 73–serine 80, aspartate 143–histidine 147, and asparagine 197–aspartate 200 each bind GTP.

It belongs to the TRAFAC class translation factor GTPase superfamily. Classic translation factor GTPase family. LepA subfamily.

It localises to the mitochondrion inner membrane. The enzyme catalyses GTP + H2O = GDP + phosphate + H(+). Functionally, promotes mitochondrial protein synthesis. May act as a fidelity factor of the translation reaction, by catalyzing a one-codon backward translocation of tRNAs on improperly translocated ribosomes. Binds to mitochondrial ribosomes in a GTP-dependent manner. The chain is Translation factor GUF1 homolog, mitochondrial from Arabidopsis thaliana (Mouse-ear cress).